We begin with the raw amino-acid sequence, 487 residues long: GTPase Der (487 aa).

EngA-type G domains lie at 3-167 (LTLA…DEME) and 203-378 (LQVA…EVWN). Residues 9-16 (GRPNVGKS), 56-60 (DTAGL), and 119-122 (NKAE) each bind GTP. A compositionally biased stretch (acidic residues) spans 167 to 190 (EQQAEEQAPETDVDLDPEDEDGEE). Residues 167–191 (EQQAEEQAPETDVDLDPEDEDGEEV) form a disordered region. GTP-binding positions include 209 to 216 (GRPNAGKS), 256 to 260 (DTAGM), and 321 to 324 (NKWD). The region spanning 379 to 465 (RRIPTAALNR…RLTLRGQGDK (87 aa)) is the KH-like domain. The disordered stretch occupies residues 458-487 (TLRGQGDKNPYKGRRKKNAGALAKHLKSRG). The segment covering 468–487 (YKGRRKKNAGALAKHLKSRG) has biased composition (basic residues).

It belongs to the TRAFAC class TrmE-Era-EngA-EngB-Septin-like GTPase superfamily. EngA (Der) GTPase family. As to quaternary structure, associates with the 50S ribosomal subunit.

Functionally, GTPase that plays an essential role in the late steps of ribosome biogenesis. The chain is GTPase Der from Ruegeria pomeroyi (strain ATCC 700808 / DSM 15171 / DSS-3) (Silicibacter pomeroyi).